The chain runs to 149 residues: Nucleoside diphosphate kinase (149 aa).

ATP is bound by residues K9, F57, R85, T91, R102, and N112. Catalysis depends on H115, which acts as the Pros-phosphohistidine intermediate.

Belongs to the NDK family. As to quaternary structure, homotetramer. Requires Mg(2+) as cofactor.

It is found in the cytoplasm. It carries out the reaction a 2'-deoxyribonucleoside 5'-diphosphate + ATP = a 2'-deoxyribonucleoside 5'-triphosphate + ADP. The enzyme catalyses a ribonucleoside 5'-diphosphate + ATP = a ribonucleoside 5'-triphosphate + ADP. Major role in the synthesis of nucleoside triphosphates other than ATP. The ATP gamma phosphate is transferred to the NDP beta phosphate via a ping-pong mechanism, using a phosphorylated active-site intermediate. This chain is Nucleoside diphosphate kinase, found in Crocosphaera subtropica (strain ATCC 51142 / BH68) (Cyanothece sp. (strain ATCC 51142)).